The following is a 195-amino-acid chain: Dehydrin DHN1 (195 aa).

The segment at 1 to 195 (MAEYGDQYGR…IKEKLPGGHH (195 aa)) is disordered. Over residues 37-48 (YGTTGTTVGYGT) the composition is skewed to low complexity. A compositionally biased stretch (polar residues) spans 50–64 (QCVTTVTTGAQKTDQ). A compositionally biased stretch (low complexity) spans 65–88 (YGTPGTTGAYGTDQYGTTGTTGEY). Basic and acidic residues-rich tracts occupy residues 136-153 (KEKI…DDQT) and 173-195 (SPEH…GGHH).

The protein belongs to the plant dehydrin family. Phosphorylated in vitro by CK2. Expressed in roots and leaves.

Its subcellular location is the cytoplasm. The protein resides in the nucleus. The sequence is that of Dehydrin DHN1 from Avicennia marina (Grey mangrove).